Here is a 244-residue protein sequence, read N- to C-terminus: tRNA (guanine-N(7)-)-methyltransferase (244 aa).

The disordered stretch occupies residues 1–20 (MTNPFDSAGSKAPPKPFTVS). S-adenosyl-L-methionine-binding residues include E75, E100, D127, and D150. The active site involves D150. K154 contributes to the substrate binding site. The segment at 156–161 (RHNKRR) is interaction with RNA. Substrate-binding positions include D186 and 223–226 (THFE).

Belongs to the class I-like SAM-binding methyltransferase superfamily. TrmB family.

It carries out the reaction guanosine(46) in tRNA + S-adenosyl-L-methionine = N(7)-methylguanosine(46) in tRNA + S-adenosyl-L-homocysteine. The protein operates within tRNA modification; N(7)-methylguanine-tRNA biosynthesis. Functionally, catalyzes the formation of N(7)-methylguanine at position 46 (m7G46) in tRNA. This is tRNA (guanine-N(7)-)-methyltransferase from Stenotrophomonas maltophilia (strain K279a).